The following is a 200-amino-acid chain: Ras-related protein Rab-10 (200 aa).

GTP is bound by residues Ser18, Gly19, Val20, Gly21, Lys22, Thr23, Cys24, Asn35, Thr36, Ser40, and Thr41. Position 23 (Thr23) interacts with Mg(2+). 2 consecutive short sequence motifs (switch) follow at residues 32 to 46 and 64 to 81; these read DAFN…EIDF and DTAG…YYRG. Positions 41 and 64 each coordinate Mg(2+). Gly67 is a binding site for GTP. The residue at position 73 (Thr73) is a Phosphothreonine. Lys102 carries the N6-acetyllysine modification. Lys102 participates in a covalent cross-link: Glycyl lysine isopeptide (Lys-Gly) (interchain with G-Cter in ubiquitin). 4 residues coordinate GTP: Asn122, Lys123, Asp125, and Met126. Residue Lys136 forms a Glycyl lysine isopeptide (Lys-Gly) (interchain with G-Cter in ubiquitin) linkage. GTP-binding residues include Ser152, Ala153, and Lys154. Residue Lys154 forms a Glycyl lysine isopeptide (Lys-Gly) (interchain with G-Cter in ubiquitin) linkage. Residues Cys199 and Cys200 are each lipidated (S-geranylgeranyl cysteine).

Belongs to the small GTPase superfamily. Rab family. Interacts with MYO5A; mediates the transport to the plasma membrane of SLC2A4/GLUT4 storage vesicles. Interacts with GDI1 and with GDI2; negatively regulates RAB10 association with membranes and activation. Interacts (GDP-bound form) with LLGL1; the interaction is direct and promotes RAB10 association with membranes and activation through competition with the Rab inhibitor GDI1. Interacts with EXOC4; probably associates with the exocyst. Interacts (GTP-bound form) with MICALCL, MICAL1, MICAL3, EHBP1 and EHBP1L1; at least in case of MICAL1 two molecules of RAB10 can bind to one molecule of MICAL1. Interacts with TBC1D13. Interacts with SEC16A. Interacts with CHM. Interacts with LRRK2; interaction facilitates phosphorylation of Thr-73. Interacts with RILPL1 and RILPL2 when phosphorylated on Thr-73. Interacts with TBC1D21. Interacts with MARCKS. Mg(2+) is required as a cofactor. In terms of processing, phosphorylation of Thr-73 in the switch II region by LRRK2 prevents the association of RAB regulatory proteins, including CHM and RAB GDP dissociation inhibitors GDI1 and GDI2. Phosphorylation of Thr-73 by LRRK2 is stimulated by RAB29 and RAB32. Phosphorylation by LRRK2 is required for localization to stressed lysosomes. Highest levels in neural and muscle tissues.

It is found in the cytoplasmic vesicle membrane. It localises to the golgi apparatus. The protein resides in the trans-Golgi network membrane. The protein localises to the endosome membrane. Its subcellular location is the recycling endosome membrane. It is found in the cytoplasmic vesicle. It localises to the phagosome membrane. The protein resides in the cell projection. The protein localises to the cilium. Its subcellular location is the endoplasmic reticulum membrane. It is found in the cytoplasm. It localises to the perinuclear region. The protein resides in the lysosome. The enzyme catalyses GTP + H2O = GDP + phosphate + H(+). Regulated by guanine nucleotide exchange factors (GEFs) DENND4C and RABIF which promote the exchange of bound GDP for free GTP. Regulated by GTPase activating proteins (GAPs) including TBC1D21 which increase the GTP hydrolysis activity. Inhibited by GDP dissociation inhibitors GDI1 and GDI2 which prevent Rab-GDP dissociation. In terms of biological role, the small GTPases Rab are key regulators of intracellular membrane trafficking, from the formation of transport vesicles to their fusion with membranes. Rabs cycle between an inactive GDP-bound form and an active GTP-bound form that is able to recruit to membranes different set of downstream effectors directly responsible for vesicle formation, movement, tethering and fusion. That Rab is mainly involved in the biosynthetic transport of proteins from the Golgi to the plasma membrane. Regulates, for instance, SLC2A4/GLUT4 glucose transporter-enriched vesicles delivery to the plasma membrane. In parallel, it regulates the transport of TLR4, a toll-like receptor to the plasma membrane and therefore may be important for innate immune response. Also plays a specific role in asymmetric protein transport to the plasma membrane. In neurons, it is involved in axonogenesis through regulation of vesicular membrane trafficking toward the axonal plasma membrane. In epithelial cells, it regulates transport from the Golgi to the basolateral membrane. May play a role in the basolateral recycling pathway and in phagosome maturation. May play a role in endoplasmic reticulum dynamics and morphology controlling tubulation along microtubules and tubules fusion. Together with LRRK2, RAB8A, and RILPL1, it regulates ciliogenesis. When phosphorylated by LRRK2 on Thr-73, it binds RILPL1 and inhibits ciliogenesis. Participates in the export of a subset of neosynthesized proteins through a Rab8-Rab10-Rab11-dependent endososomal export route. Targeted to and stabilized on stressed lysosomes through LRRK2 phosphorylation where it promotes the extracellular release of lysosomal content through EHBP1 and EHNP1L1 effector proteins. The polypeptide is Ras-related protein Rab-10 (Rattus norvegicus (Rat)).